A 183-amino-acid polypeptide reads, in one-letter code: Putative 3-methyladenine DNA glycosylase (183 aa).

It belongs to the DNA glycosylase MPG family.

This Rickettsia rickettsii (strain Iowa) protein is Putative 3-methyladenine DNA glycosylase.